A 78-amino-acid chain; its full sequence is Ubiquitin-like protein 1 (78 aa).

Belongs to the ubiquitin family.

The sequence is that of Ubiquitin-like protein 1 (ubl1) from Schizosaccharomyces pombe (strain 972 / ATCC 24843) (Fission yeast).